Reading from the N-terminus, the 180-residue chain is Endogenous alpha-amylase/subtilisin inhibitor (180 aa).

Disulfide bonds link cysteine 42/cysteine 89 and cysteine 143/cysteine 147.

This sequence belongs to the protease inhibitor I3 (leguminous Kunitz-type inhibitor) family.

Inhibitor of endogenous alpha-amylase (wheat also produces an exogenous inhibitor which inactivates alpha-amylase from animal and insect origin). This inhibitor can also inhibit subtilisin. The polypeptide is Endogenous alpha-amylase/subtilisin inhibitor (Triticum aestivum (Wheat)).